The primary structure comprises 177 residues: MLLMPNKDWHWEYNETCKQLSISLGSEMEFLTPYKTKLLIPDALTATEFNLEHAKFYIKMLETLPKVLHISDAGIVQTALNATAAHFLLQSQMPKSWFFDVSDECVYCEVGKLFQLNCGYSKVLALVVDNGLQAATVMILSQYCQLSDSKSLVQFDTIKVMHNRLHPLRKARQVVAA.

It belongs to the ZapC family. Interacts directly with FtsZ.

Its subcellular location is the cytoplasm. Contributes to the efficiency of the cell division process by stabilizing the polymeric form of the cell division protein FtsZ. Acts by promoting interactions between FtsZ protofilaments and suppressing the GTPase activity of FtsZ. This chain is Cell division protein ZapC, found in Shewanella frigidimarina (strain NCIMB 400).